The chain runs to 532 residues: Probable cyclic di-GMP phosphodiesterase PdeD (532 aa).

Helical transmembrane passes span 16 to 36 (MIVCTICALVTLASTLSVRFI) and 245 to 265 (LPLAVLLSLLVGYIAWLATAY). Residues 266–515 (RMSFSREINL…DFPKWLAGSQ (250 aa)) enclose the EAL domain.

The protein resides in the cell membrane. It catalyses the reaction 3',3'-c-di-GMP + H2O = 5'-phosphoguanylyl(3'-&gt;5')guanosine + H(+). Functionally, phosphodiesterase (PDE) that catalyzes the hydrolysis of cyclic-di-GMP (c-di-GMP) to 5'-pGpG. May serve as a negative regulator of cellulose synthesis (as has been suggested for S.typhimurium); overexpression inhibits cell aggregation in strains able to produce adhesive curli fimbriae. Cyclic-di-GMP is a second messenger which controls cell surface-associated traits in bacteria. The protein is Probable cyclic di-GMP phosphodiesterase PdeD of Escherichia coli (strain K12).